The chain runs to 32 residues: Peptide II.10.10 (32 aa).

3 cysteine pairs are disulfide-bonded: Cys-5-Cys-24, Cys-10-Cys-29, and Cys-14-Cys-31.

It belongs to the short scorpion toxin superfamily. Potassium channel inhibitor family. Alpha-KTx 10 subfamily. As to expression, expressed by the venom gland.

The protein localises to the secreted. This chain is Peptide II.10.10, found in Centruroides tecomanus (Scorpion).